Here is a 135-residue protein sequence, read N- to C-terminus: D-ribose pyranase (135 aa).

Catalysis depends on H20, which acts as the Proton donor. Substrate is bound by residues D28, H102, and 124 to 126 (YSN).

Belongs to the RbsD / FucU family. RbsD subfamily. Homodecamer.

Its subcellular location is the cytoplasm. The enzyme catalyses beta-D-ribopyranose = beta-D-ribofuranose. Its pathway is carbohydrate metabolism; D-ribose degradation; D-ribose 5-phosphate from beta-D-ribopyranose: step 1/2. Its function is as follows. Catalyzes the interconversion of beta-pyran and beta-furan forms of D-ribose. In Thermotoga maritima (strain ATCC 43589 / DSM 3109 / JCM 10099 / NBRC 100826 / MSB8), this protein is D-ribose pyranase.